The sequence spans 479 residues: NADH-quinone oxidoreductase subunit N 2 (479 aa).

The next 14 membrane-spanning stretches (helical) occupy residues 9 to 29 (WALA…LLIV), 40 to 60 (LLLW…LMLA), 75 to 95 (RFAV…FFLS), 110 to 130 (YVLL…IDLL), 131 to 151 (SIYV…GFLR), 164 to 184 (VILG…IYGL), 206 to 226 (LLLA…AVPF), 238 to 258 (PTTI…AVIL), 272 to 292 (WIIV…VALV), 299 to 319 (LLAY…VAGG), 326 to 346 (VMLY…AVIM), 371 to 391 (ALLM…AGFF), 404 to 424 (GFVA…YFYI), and 449 to 469 (ATLA…AWFL).

This sequence belongs to the complex I subunit 2 family. In terms of assembly, NDH-1 is composed of 14 different subunits. Subunits NuoA, H, J, K, L, M, N constitute the membrane sector of the complex.

The protein localises to the cell inner membrane. The catalysed reaction is a quinone + NADH + 5 H(+)(in) = a quinol + NAD(+) + 4 H(+)(out). Functionally, NDH-1 shuttles electrons from NADH, via FMN and iron-sulfur (Fe-S) centers, to quinones in the respiratory chain. The immediate electron acceptor for the enzyme in this species is believed to be ubiquinone. Couples the redox reaction to proton translocation (for every two electrons transferred, four hydrogen ions are translocated across the cytoplasmic membrane), and thus conserves the redox energy in a proton gradient. This chain is NADH-quinone oxidoreductase subunit N 2, found in Rhizobium meliloti (strain 1021) (Ensifer meliloti).